We begin with the raw amino-acid sequence, 125 residues long: MFAVIKTGGKQYNVSADDTITVMALPGEKGDAVSFDTVLMFGGEGQSTLGAPFIEGASVVGEIVEQKRGPKVISFKKRRRQNSKRKRGHRQDLTLVRITSLGAGGASPAAAAASSETPAASAPEA.

The span at 75–89 (FKKRRRQNSKRKRGH) shows a compositional bias: basic residues. 2 disordered regions span residues 75-94 (FKKR…QDLT) and 103-125 (AGGA…APEA). The segment covering 106 to 125 (ASPAAAAASSETPAASAPEA) has biased composition (low complexity).

Belongs to the bacterial ribosomal protein bL21 family. In terms of assembly, part of the 50S ribosomal subunit. Contacts protein L20.

Its function is as follows. This protein binds to 23S rRNA in the presence of protein L20. The sequence is that of Large ribosomal subunit protein bL21 from Methylocella silvestris (strain DSM 15510 / CIP 108128 / LMG 27833 / NCIMB 13906 / BL2).